A 349-amino-acid chain; its full sequence is Meiotic recombination protein DMC1 homolog (349 aa).

Residue G138–T145 participates in ATP binding. R240 is a dsDNA binding site. SsDNA is bound by residues R240, F243, R246, R252, and R320. The dsDNA site is built by R246 and R252.

This sequence belongs to the RecA family. DMC1 subfamily. Double stacked ring-shaped homooctamer.

It is found in the nucleus. May participate in meiotic recombination. The polypeptide is Meiotic recombination protein DMC1 homolog (LIM15) (Lilium longiflorum (Trumpet lily)).